We begin with the raw amino-acid sequence, 60 residues long: MSNMPVLIITLLLFSMYISTAAQKPTEIKCRYPADCHIMCRKVTGRAEGKCMNGKCTCYY.

Positions 1-22 (MSNMPVLIITLLLFSMYISTAA) are cleaved as a signal peptide. Disulfide bonds link Cys-30-Cys-51, Cys-36-Cys-56, and Cys-40-Cys-58.

This sequence belongs to the short scorpion toxin superfamily. Potassium channel inhibitor family. Alpha-KTx 12 subfamily. As to expression, expressed by the venom gland.

The protein resides in the secreted. Its function is as follows. Inhibits voltage-gated potassium channels. This chain is Potassium channel toxin alpha-KTx 12.7, found in Lychas mucronatus (Chinese swimming scorpion).